The sequence spans 299 residues: Bifunctional protein FolD (299 aa).

NADP(+) contacts are provided by residues 168–170 (GRS), Ser-193, and Ile-234.

This sequence belongs to the tetrahydrofolate dehydrogenase/cyclohydrolase family. Homodimer.

The enzyme catalyses (6R)-5,10-methylene-5,6,7,8-tetrahydrofolate + NADP(+) = (6R)-5,10-methenyltetrahydrofolate + NADPH. The catalysed reaction is (6R)-5,10-methenyltetrahydrofolate + H2O = (6R)-10-formyltetrahydrofolate + H(+). The protein operates within one-carbon metabolism; tetrahydrofolate interconversion. Functionally, catalyzes the oxidation of 5,10-methylenetetrahydrofolate to 5,10-methenyltetrahydrofolate and then the hydrolysis of 5,10-methenyltetrahydrofolate to 10-formyltetrahydrofolate. The sequence is that of Bifunctional protein FolD from Brucella abortus (strain S19).